The following is a 547-amino-acid chain: Chaperonin GroEL (547 aa).

Residues 30 to 33 (TLGP), lysine 51, 87 to 91 (DGTTT), glycine 415, and aspartate 496 each bind ATP.

The protein belongs to the chaperonin (HSP60) family. As to quaternary structure, forms a cylinder of 14 subunits composed of two heptameric rings stacked back-to-back. Interacts with the co-chaperonin GroES.

Its subcellular location is the cytoplasm. It carries out the reaction ATP + H2O + a folded polypeptide = ADP + phosphate + an unfolded polypeptide.. Functionally, together with its co-chaperonin GroES, plays an essential role in assisting protein folding. The GroEL-GroES system forms a nano-cage that allows encapsulation of the non-native substrate proteins and provides a physical environment optimized to promote and accelerate protein folding. The chain is Chaperonin GroEL from Actinobacillus pleuropneumoniae serotype 5b (strain L20).